A 226-amino-acid chain; its full sequence is Probable chemoreceptor glutamine deamidase CheD (226 aa).

This sequence belongs to the CheD family.

The enzyme catalyses L-glutaminyl-[protein] + H2O = L-glutamyl-[protein] + NH4(+). Probably deamidates glutamine residues to glutamate on methyl-accepting chemotaxis receptors (MCPs), playing an important role in chemotaxis. The polypeptide is Probable chemoreceptor glutamine deamidase CheD (Bordetella avium (strain 197N)).